We begin with the raw amino-acid sequence, 278 residues long: MSTLRVLHEKSELGKTTVYPKEYAPHLLLPIPRDLNRKTLNVNVSEPPPFYGYDLWNAYELSWLNEKGKPFAARGEFIIPATSSHLIESKSFKLYLNSFNNERFADAAAVSQTMKRDLSKRVNESVTVNFILHETEIPVAYSPKGSLLDVLDIAIDTYSPDPNLLSTSQETVTETLYSHLLKSNCPVTGQPDWGSIEIHYTGPKIDHVQLLKYIISYRNHEEFHEACVERFFMDILRHCRPQELTVQARYTRRGGLDINPYRSTNPTFSVQNHRSFRQ.

Ile-87–Ser-89 is a substrate binding site. Ser-89–Lys-90 contributes to the NADPH binding site. Catalysis depends on Cys-185, which acts as the Thioimide intermediate. Asp-192 serves as the catalytic Proton donor. A substrate-binding site is contributed by His-224–Glu-225. Arg-253–Gly-254 contacts NADPH. The interval Gly-255 to Gln-278 is disordered. Residues Tyr-261–Gln-278 are compositionally biased toward polar residues.

The protein belongs to the GTP cyclohydrolase I family. QueF type 2 subfamily. Homodimer.

Its subcellular location is the cytoplasm. The enzyme catalyses 7-aminomethyl-7-carbaguanine + 2 NADP(+) = 7-cyano-7-deazaguanine + 2 NADPH + 3 H(+). It functions in the pathway tRNA modification; tRNA-queuosine biosynthesis. In terms of biological role, catalyzes the NADPH-dependent reduction of 7-cyano-7-deazaguanine (preQ0) to 7-aminomethyl-7-deazaguanine (preQ1). The sequence is that of NADPH-dependent 7-cyano-7-deazaguanine reductase from Coxiella burnetii (strain CbuG_Q212) (Coxiella burnetii (strain Q212)).